The primary structure comprises 355 residues: Peptide chain release factor 1 (355 aa).

N5-methylglutamine is present on Gln233. Over residues 280-293 (ERRKKEQERADSRR) the composition is skewed to basic and acidic residues. The interval 280–308 (ERRKKEQERADSRRGQVGSGDRSERIRTY) is disordered.

This sequence belongs to the prokaryotic/mitochondrial release factor family. Post-translationally, methylated by PrmC. Methylation increases the termination efficiency of RF1.

The protein resides in the cytoplasm. In terms of biological role, peptide chain release factor 1 directs the termination of translation in response to the peptide chain termination codons UAG and UAA. The protein is Peptide chain release factor 1 of Rickettsia peacockii (strain Rustic).